The sequence spans 148 residues: uncharacterized protein (148 aa).

Low complexity predominate over residues 1–17 (MCPPVRQRPAQAPPAKR). Disordered stretches follow at residues 1 to 86 (MCPP…VQSP) and 122 to 148 (RAHRLPQPKPPCLSRQRPSPDSQTSPC). Residues 38–57 (RPPKMQRRPRPPVAKRRRFP) show a composition bias toward basic residues. A compositionally biased stretch (polar residues) spans 137–148 (QRPSPDSQTSPC).

Belongs to the Epstein-Barr virus BLLF2 family.

This is an uncharacterized protein from Epstein-Barr virus (strain AG876) (HHV-4).